Here is a 344-residue protein sequence, read N- to C-terminus: Holliday junction branch migration complex subunit RuvB (344 aa).

Positions 1-185 (MTERSDRDVS…FGFTAHMDFY (185 aa)) are large ATPase domain (RuvB-L). Residues L24, R25, G66, K69, T70, S71, 132–134 (EDF), R175, Y185, and R222 contribute to the ATP site. A Mg(2+)-binding site is contributed by T70. Residues 186–256 (EPAELERVLA…VAKAALEVYD (71 aa)) are small ATPAse domain (RuvB-S). The tract at residues 259–344 (ELGLDRLDRA…VGASQPGLFE (86 aa)) is head domain (RuvB-H). DNA is bound by residues R314 and R319.

It belongs to the RuvB family. As to quaternary structure, homohexamer. Forms an RuvA(8)-RuvB(12)-Holliday junction (HJ) complex. HJ DNA is sandwiched between 2 RuvA tetramers; dsDNA enters through RuvA and exits via RuvB. An RuvB hexamer assembles on each DNA strand where it exits the tetramer. Each RuvB hexamer is contacted by two RuvA subunits (via domain III) on 2 adjacent RuvB subunits; this complex drives branch migration. In the full resolvosome a probable DNA-RuvA(4)-RuvB(12)-RuvC(2) complex forms which resolves the HJ.

The protein resides in the cytoplasm. The enzyme catalyses ATP + H2O = ADP + phosphate + H(+). The RuvA-RuvB-RuvC complex processes Holliday junction (HJ) DNA during genetic recombination and DNA repair, while the RuvA-RuvB complex plays an important role in the rescue of blocked DNA replication forks via replication fork reversal (RFR). RuvA specifically binds to HJ cruciform DNA, conferring on it an open structure. The RuvB hexamer acts as an ATP-dependent pump, pulling dsDNA into and through the RuvAB complex. RuvB forms 2 homohexamers on either side of HJ DNA bound by 1 or 2 RuvA tetramers; 4 subunits per hexamer contact DNA at a time. Coordinated motions by a converter formed by DNA-disengaged RuvB subunits stimulates ATP hydrolysis and nucleotide exchange. Immobilization of the converter enables RuvB to convert the ATP-contained energy into a lever motion, pulling 2 nucleotides of DNA out of the RuvA tetramer per ATP hydrolyzed, thus driving DNA branch migration. The RuvB motors rotate together with the DNA substrate, which together with the progressing nucleotide cycle form the mechanistic basis for DNA recombination by continuous HJ branch migration. Branch migration allows RuvC to scan DNA until it finds its consensus sequence, where it cleaves and resolves cruciform DNA. The chain is Holliday junction branch migration complex subunit RuvB from Mycobacterium tuberculosis (strain ATCC 25177 / H37Ra).